A 768-amino-acid polypeptide reads, in one-letter code: 5-methyltetrahydropteroyltriglutamate--homocysteine methyltransferase (768 aa).

Residues 17–20 and K113 each bind 5-methyltetrahydropteroyltri-L-glutamate; that span reads REWK. Residues 440–442 and E493 contribute to the L-homocysteine site; that span reads IGS. L-methionine contacts are provided by residues 440–442 and E493; that span reads IGS. Residue W570 participates in 5-methyltetrahydropteroyltri-L-glutamate binding. D608 serves as a coordination point for L-homocysteine. D608 provides a ligand contact to L-methionine. E614 provides a ligand contact to 5-methyltetrahydropteroyltri-L-glutamate. 3 residues coordinate Zn(2+): H650, C652, and E674. H703 acts as the Proton donor in catalysis. Residue C735 participates in Zn(2+) binding.

Belongs to the vitamin-B12 independent methionine synthase family. Requires Zn(2+) as cofactor.

The catalysed reaction is 5-methyltetrahydropteroyltri-L-glutamate + L-homocysteine = tetrahydropteroyltri-L-glutamate + L-methionine. It functions in the pathway amino-acid biosynthesis; L-methionine biosynthesis via de novo pathway; L-methionine from L-homocysteine (MetE route): step 1/1. Catalyzes the transfer of a methyl group from 5-methyltetrahydrofolate to homocysteine resulting in methionine formation. The chain is 5-methyltetrahydropteroyltriglutamate--homocysteine methyltransferase from Lactiplantibacillus plantarum (strain ATCC BAA-793 / NCIMB 8826 / WCFS1) (Lactobacillus plantarum).